The following is a 251-amino-acid chain: Isoprenyl transferase (251 aa).

Asp-31 is a catalytic residue. Asp-31 is a binding site for Mg(2+). Residues 32–35 (GNGR), Trp-36, Arg-44, His-48, and 76–78 (STE) each bind substrate. Asn-79 serves as the catalytic Proton acceptor. Substrate is bound by residues Trp-80, Arg-82, Arg-199, and 205-207 (RIS). Residue Glu-218 coordinates Mg(2+).

Belongs to the UPP synthase family. In terms of assembly, homodimer. The cofactor is Mg(2+).

Its function is as follows. Catalyzes the condensation of isopentenyl diphosphate (IPP) with allylic pyrophosphates generating different type of terpenoids. The polypeptide is Isoprenyl transferase (Thermosynechococcus vestitus (strain NIES-2133 / IAM M-273 / BP-1)).